The sequence spans 373 residues: WAT1-related protein At4g30420 (373 aa).

10 helical membrane passes run 2-22 (AMTM…ATLV), 29-49 (VFIL…LYLS), 55-75 (IAIS…SLIG), 94-114 (MGSA…FLAG), 125-145 (GLAK…MTLL), 173-193 (WLIG…WLIL), 205-225 (LSLS…VTFF), 244-264 (CLYA…WAIA), 270-290 (FSAL…ALFF), and 294-314 (IYTG…TVLW). 2 consecutive EamA domains span residues 9 to 135 (CYAG…TILC) and 186 to 313 (CWSF…YTVL).

This sequence belongs to the drug/metabolite transporter (DMT) superfamily. Plant drug/metabolite exporter (P-DME) (TC 2.A.7.4) family.

The protein resides in the membrane. This chain is WAT1-related protein At4g30420, found in Arabidopsis thaliana (Mouse-ear cress).